The chain runs to 395 residues: Elongation factor Tu (395 aa).

One can recognise a tr-type G domain in the interval 10-204 (KPHVNIGTIG…AVDSYIPTPE (195 aa)). A G1 region spans residues 19-26 (GHVDHGKT). 19–26 (GHVDHGKT) is a GTP binding site. Threonine 26 lines the Mg(2+) pocket. A G2 region spans residues 60–64 (GITIS). A G3 region spans residues 81–84 (DCPG). GTP-binding positions include 81 to 85 (DCPGH) and 136 to 139 (NKCD). The tract at residues 136–139 (NKCD) is G4. Positions 174–176 (SAL) are G5.

This sequence belongs to the TRAFAC class translation factor GTPase superfamily. Classic translation factor GTPase family. EF-Tu/EF-1A subfamily. In terms of assembly, monomer.

The protein localises to the cytoplasm. It carries out the reaction GTP + H2O = GDP + phosphate + H(+). Functionally, GTP hydrolase that promotes the GTP-dependent binding of aminoacyl-tRNA to the A-site of ribosomes during protein biosynthesis. In Listeria monocytogenes serotype 4b (strain CLIP80459), this protein is Elongation factor Tu.